Reading from the N-terminus, the 323-residue chain is Aquaporin NIP3-1 (323 aa).

Met-1 is subject to N-acetylmethionine. A run of 2 helical transmembrane segments spans residues 45–65 (LIGE…AIVV) and 73–93 (VTLP…IYSI). The short motif at 102–104 (NPA) is the NPA 1 element. A run of 3 helical transmembrane segments spans residues 122–142 (GYIA…RLVF), 167–187 (TSFV…SAVA), and 196–216 (FAGI…GPIS). An NPA 2 motif is present at residues 221-223 (NPA). A helical membrane pass occupies residues 239 to 259 (WLYIVSPVIGALSGAWTYGLL).

This sequence belongs to the MIP/aquaporin (TC 1.A.8) family. NIP (TC 1.A.8.12) subfamily.

Its subcellular location is the membrane. In terms of biological role, aquaporins facilitate the transport of water and small neutral solutes across cell membranes. In Arabidopsis thaliana (Mouse-ear cress), this protein is Aquaporin NIP3-1 (NIP3-1).